The chain runs to 157 residues: UPF0262 protein Atu0536 (157 aa).

This sequence belongs to the UPF0262 family.

This chain is UPF0262 protein Atu0536, found in Agrobacterium fabrum (strain C58 / ATCC 33970) (Agrobacterium tumefaciens (strain C58)).